Here is a 154-residue protein sequence, read N- to C-terminus: 17.6 kDa class I heat shock protein (154 aa).

Residues 40 to 154 form the sHSP domain; sequence ETSAFANTRI…PDVKSIEISG (115 aa).

This sequence belongs to the small heat shock protein (HSP20) family. Forms oligomeric structures.

Its subcellular location is the cytoplasm. This is 17.6 kDa class I heat shock protein from Solanum peruvianum (Peruvian tomato).